We begin with the raw amino-acid sequence, 159 residues long: UPF0262 protein RD1_1069 (159 aa).

This sequence belongs to the UPF0262 family.

The polypeptide is UPF0262 protein RD1_1069 (Roseobacter denitrificans (strain ATCC 33942 / OCh 114) (Erythrobacter sp. (strain OCh 114))).